A 253-amino-acid polypeptide reads, in one-letter code: Sulfate transporter CysZ (253 aa).

4 consecutive transmembrane segments (helical) span residues 31–51 (FVIL…WWLF), 75–95 (LLWP…FSTI), 151–171 (IVLL…PVLW), and 222–242 (IPLL…AMWV).

The protein belongs to the CysZ family.

The protein localises to the cell inner membrane. High affinity, high specificity proton-dependent sulfate transporter, which mediates sulfate uptake. Provides the sulfur source for the cysteine synthesis pathway. The protein is Sulfate transporter CysZ of Escherichia coli (strain 55989 / EAEC).